We begin with the raw amino-acid sequence, 196 residues long: Holliday junction branch migration complex subunit RuvA (196 aa).

The tract at residues 1–63 (MYEYFKGIIS…EDAELLYGFA (63 aa)) is domain I. The segment at 64-142 (TEEEKQLFLS…AAGSPAESKA (79 aa)) is domain II. The tract at residues 143–146 (PVQT) is flexible linker. The interval 147–196 (ADNQELEEAMEAMLALGYKAAELKKIKKFFEGTTDTAENYIKSALKMLVK) is domain III.

It belongs to the RuvA family. As to quaternary structure, homotetramer. Forms an RuvA(8)-RuvB(12)-Holliday junction (HJ) complex. HJ DNA is sandwiched between 2 RuvA tetramers; dsDNA enters through RuvA and exits via RuvB. An RuvB hexamer assembles on each DNA strand where it exits the tetramer. Each RuvB hexamer is contacted by two RuvA subunits (via domain III) on 2 adjacent RuvB subunits; this complex drives branch migration. In the full resolvosome a probable DNA-RuvA(4)-RuvB(12)-RuvC(2) complex forms which resolves the HJ.

Its subcellular location is the cytoplasm. In terms of biological role, the RuvA-RuvB-RuvC complex processes Holliday junction (HJ) DNA during genetic recombination and DNA repair, while the RuvA-RuvB complex plays an important role in the rescue of blocked DNA replication forks via replication fork reversal (RFR). RuvA specifically binds to HJ cruciform DNA, conferring on it an open structure. The RuvB hexamer acts as an ATP-dependent pump, pulling dsDNA into and through the RuvAB complex. HJ branch migration allows RuvC to scan DNA until it finds its consensus sequence, where it cleaves and resolves the cruciform DNA. The polypeptide is Holliday junction branch migration complex subunit RuvA (Streptococcus sanguinis (strain SK36)).